A 229-amino-acid polypeptide reads, in one-letter code: Growth factor receptor-bound protein 2-A (229 aa).

In terms of domain architecture, SH3 1 spans 1–58 (MEAIAKYDFKATADDELSFKRGDVLKVLNEECDQNWYKAELNGKDGFIPKNYIEMKAH). Residues 60 to 152 (WFFGKIPRAK…NQQIFLRDIE (93 aa)) form the SH2 domain. Residues 168–227 (QQPTYVQALFDFDPQEDGELGFRRGDFIQVVDNSDPNWWKGTCLSQTGMFPRNYVTPVNR) enclose the SH3 2 domain.

Belongs to the GRB2/sem-5/DRK family.

Its subcellular location is the nucleus. It is found in the cytoplasm. It localises to the endosome. The protein localises to the golgi apparatus. Adapter protein that provides a critical link between cell surface growth factor receptors and the Ras signaling pathway. Promotes meiotic reinitiation during oocyte maturation. This chain is Growth factor receptor-bound protein 2-A (grb2-a), found in Xenopus laevis (African clawed frog).